A 100-amino-acid polypeptide reads, in one-letter code: Vesicle-associated membrane protein 8 (100 aa).

Over 1–74 the chain is Cytoplasmic; that stretch reads MEASGSAGND…ARKFWWKNVK (74 aa). Residues serine 4 and serine 17 each carry the phosphoserine modification. The v-SNARE coiled-coil homology domain occupies 11–71; sequence RVRNLQSEVE…QKVARKFWWK (61 aa). Residues threonine 27, threonine 47, and threonine 53 each carry the phosphothreonine modification. The residue at position 54 (serine 54) is a Phosphoserine. The helical; Anchor for type IV membrane protein transmembrane segment at 75–95 threads the bilayer; sequence MIVIICVIVLIILILIILFAT. The Vesicular portion of the chain corresponds to 96 to 100; the sequence is GTIPT.

This sequence belongs to the synaptobrevin family. In terms of assembly, forms a SNARE complex composed of VAMP8, SNAP29 and STX17 involved in fusion of autophagosome with lysosome. Found in a number of SNARE complexes with NAPA, SNAP23, SNAP25, STX1A, STX4, STX7, STX8 and VTI1B. Interacts with PICALM. SNARE complex formation and binding by PICALM are mutually exclusive processes for VAMP8. Interacts with SBF2/MTMR13. Interacts with RAB21 (in GTP-bound form) in response to starvation; the interaction probably regulates VAMP8 endolysosomal trafficking. Interacts with STX17; this interaction is increased in the absence of TMEM39A. Interacts with TRIM6. Expressed (at protein level) at a high level in kidney, lung and spleen; at a lower level in testis, liver, brain and heart. Expressed in kidney and retinal pigment epithelium derived cell line.

It localises to the lysosome membrane. The protein resides in the late endosome membrane. It is found in the early endosome membrane. Its subcellular location is the midbody. The protein localises to the cell membrane. It localises to the zymogen granule membrane. Functionally, SNAREs, soluble N-ethylmaleimide-sensitive factor-attachment protein receptors, are essential proteins for fusion of cellular membranes. SNAREs localized on opposing membranes assemble to form a trans-SNARE complex, an extended, parallel four alpha-helical bundle that drives membrane fusion. VAMP8 is a SNARE involved in autophagy through the direct control of autophagosome membrane fusion with the lysososome membrane via its interaction with the STX17-SNAP29 binary t-SNARE complex. Also required for dense-granule secretion in platelets. Also plays a role in regulated enzyme secretion in pancreatic acinar cells. Involved in the abscission of the midbody during cell division, which leads to completely separate daughter cells. Involved in the homotypic fusion of early and late endosomes. Also participates in the activation of type I interferon antiviral response through a TRIM6-dependent mechanism. The chain is Vesicle-associated membrane protein 8 from Rattus norvegicus (Rat).